Reading from the N-terminus, the 376-residue chain is 2-hydroxypropyl-CoM lyase (376 aa).

The Zn(2+) site is built by histidine 218, cysteine 220, and cysteine 341.

The protein belongs to the vitamin-B12 independent methionine synthase family. In terms of assembly, homohexamer. Component I of the aliphatic epoxide carboxylation complex together with components II, III and IV. Requires Zn(2+) as cofactor.

The catalysed reaction is (R)-2-hydroxypropyl-coenzyme M = (R)-1,2-epoxypropane + coenzyme M. The enzyme catalyses (S)-2-hydroxypropyl-coenzyme M = (S)-1,2-epoxypropane + coenzyme M. Its pathway is alkene metabolism; propylene degradation. With respect to regulation, inhibited by methylepoxypropane. Inhibited by the zinc chelator 4-(2-pyridylazo)resorcinol (PAR), in the presence of p- (hydroxymercuri)benzenesulfonic acid (PMPS), and by EDTA. Not inhibited by the coenzyme M analog 2-bromoethanesulfonate (BES). In terms of biological role, involved in aliphatic epoxide carboxylation. Catalyzes the addition of coenzyme M (CoM) to either R- or S-epoxypropane to form the thioether conjugate 2-hydroxypropyl-CoM. Catalyzes the reaction of CoM with R-epoxypropane at a rate approximately twice of that with S-epoxypropane. The CoM analogs 2-mercaptopropionate, 2-mercaptoethanol and cysteine substitute poorly for CoM as the thiol substrate. The protein is 2-hydroxypropyl-CoM lyase of Xanthobacter autotrophicus (strain ATCC BAA-1158 / Py2).